A 148-amino-acid chain; its full sequence is MNLTTQKRLAADILKVGVNRIWIDPERIDEVSRAITRDGVKQLIKDGAIKAKPKKGISSYRSKKIAQQKKKGRRRGPGSIKGAKGARRPKKDEWMTTIRALRKDLKEMRDNREINKSTYRKLYKMAKGGAFKSKSYMKTYARDHDMLR.

Positions K52–G76 are enriched in basic residues. A disordered region spans residues K52–M95.

The protein belongs to the eukaryotic ribosomal protein eL19 family. Part of the 50S ribosomal subunit.

Its function is as follows. Binds to the 23S rRNA. In Methanothermobacter thermautotrophicus (strain ATCC 29096 / DSM 1053 / JCM 10044 / NBRC 100330 / Delta H) (Methanobacterium thermoautotrophicum), this protein is Large ribosomal subunit protein eL19.